Reading from the N-terminus, the 333-residue chain is DNA-directed RNA polymerase subunit alpha (333 aa).

Residues 1 to 234 (MQSSVNEFLT…QQLAAFVDLK (234 aa)) are alpha N-terminal domain (alpha-NTD). The segment at 248 to 333 (IDPILLRPVD…SLKKDDKATA (86 aa)) is alpha C-terminal domain (alpha-CTD).

The protein belongs to the RNA polymerase alpha chain family. In terms of assembly, homodimer. The RNAP catalytic core consists of 2 alpha, 1 beta, 1 beta' and 1 omega subunit. When a sigma factor is associated with the core the holoenzyme is formed, which can initiate transcription.

It catalyses the reaction RNA(n) + a ribonucleoside 5'-triphosphate = RNA(n+1) + diphosphate. Functionally, DNA-dependent RNA polymerase catalyzes the transcription of DNA into RNA using the four ribonucleoside triphosphates as substrates. The protein is DNA-directed RNA polymerase subunit alpha of Pseudomonas putida (Arthrobacter siderocapsulatus).